The sequence spans 154 residues: MSEKNQLQVEAIRHGSVIDHVPAGQGIKILKLFQLIETQERITVGFNLKSGALGKKDLIKIENTRLTAEQANQLALFAPKATVNIIEDFAVVKKHQLELPEFITGVFHCPNSNCISHNEPVDSYFRVREVKGVVRMKCKYCEKSFTQDIVSERY.

Zn(2+) is bound by residues Cys109, Cys114, Cys138, and Cys141.

The protein belongs to the PyrI family. As to quaternary structure, contains catalytic and regulatory chains. It depends on Zn(2+) as a cofactor.

Its function is as follows. Involved in allosteric regulation of aspartate carbamoyltransferase. The protein is Aspartate carbamoyltransferase regulatory chain of Aeromonas salmonicida (strain A449).